Reading from the N-terminus, the 290-residue chain is tRNA (adenine(58)-N(1))-methyltransferase catalytic subunit TRMT61A (290 aa).

Ser-2 bears the N-acetylserine mark. Substrate regions lie at residues 20–22 (LGH), 35–42 (QTQTRHGV), 64–65 (GW), 85–89 (QILYS), and 110–117 (SGTGSGSV). S-adenosyl-L-methionine is bound by residues Leu-87, 114–116 (SGS), Glu-135, Arg-140, 163–164 (DV), and Asp-181. Substrate regions lie at residues 180 to 183 (LDIP) and 205 to 212 (SFSPCIEQ). Thr-279 is a binding site for substrate.

Belongs to the class I-like SAM-binding methyltransferase superfamily. TRM61 family. In terms of assembly, heterotetramer; composed of two copies of TRMT6 and two copies of TRMT61A.

It is found in the nucleus. The enzyme catalyses adenosine(58) in tRNA + S-adenosyl-L-methionine = N(1)-methyladenosine(58) in tRNA + S-adenosyl-L-homocysteine + H(+). The catalysed reaction is an adenosine in mRNA + S-adenosyl-L-methionine = an N(1)-methyladenosine in mRNA + S-adenosyl-L-homocysteine + H(+). In terms of biological role, catalytic subunit of tRNA (adenine-N(1)-)-methyltransferase, which catalyzes the formation of N(1)-methyladenine at position 58 (m1A58) in initiator methionyl-tRNA. Catalytic subunit of mRNA N(1)-methyltransferase complex, which mediates methylation of adenosine residues at the N(1) position of a small subset of mRNAs: N(1) methylation takes place in tRNA T-loop-like structures of mRNAs and is only present at low stoichiometries. This is tRNA (adenine(58)-N(1))-methyltransferase catalytic subunit TRMT61A (Trmt61a) from Rattus norvegicus (Rat).